Here is a 73-residue protein sequence, read N- to C-terminus: Disintegrin trigramin-beta-2 (73 aa).

The region spanning 1–73 is the Disintegrin domain; the sequence is EAGKDCDCGS…AGCPRNPFHA (73 aa). 6 cysteine pairs are disulfide-bonded: C6-C21, C8-C16, C15-C38, C29-C35, C34-C59, and C47-C66. Residues 51-53 carry the Cell attachment site motif; sequence RGD.

It belongs to the venom metalloproteinase (M12B) family. P-II subfamily. P-IIa sub-subfamily. In terms of assembly, monomer (disintegrin). Expressed by the venom gland.

Its subcellular location is the secreted. Functionally, inhibits fibrinogen interaction with platelets. Acts by binding to the alpha-IIb/beta-3 receptor (ITGA2B/ITGB3) on the platelet surface and inhibits aggregation induced by ADP, thrombin, platelet-activating factor and collagen. The protein is Disintegrin trigramin-beta-2 of Craspedocephalus gramineus (Bamboo pit viper).